We begin with the raw amino-acid sequence, 420 residues long: UDP-N-acetylglucosamine 1-carboxyvinyltransferase (420 aa).

22–23 (KN) provides a ligand contact to phosphoenolpyruvate. Arginine 91 contacts UDP-N-acetyl-alpha-D-glucosamine. Catalysis depends on cysteine 115, which acts as the Proton donor. Cysteine 115 is modified (2-(S-cysteinyl)pyruvic acid O-phosphothioketal). UDP-N-acetyl-alpha-D-glucosamine-binding positions include 120 to 124 (RPVDL), 160 to 163 (KVSV), aspartate 305, and isoleucine 327.

This sequence belongs to the EPSP synthase family. MurA subfamily.

The protein localises to the cytoplasm. It catalyses the reaction phosphoenolpyruvate + UDP-N-acetyl-alpha-D-glucosamine = UDP-N-acetyl-3-O-(1-carboxyvinyl)-alpha-D-glucosamine + phosphate. The protein operates within cell wall biogenesis; peptidoglycan biosynthesis. Cell wall formation. Adds enolpyruvyl to UDP-N-acetylglucosamine. The sequence is that of UDP-N-acetylglucosamine 1-carboxyvinyltransferase from Erwinia tasmaniensis (strain DSM 17950 / CFBP 7177 / CIP 109463 / NCPPB 4357 / Et1/99).